The primary structure comprises 386 residues: Succinate--CoA ligase [ADP-forming] subunit beta (386 aa).

One can recognise an ATP-grasp domain in the interval 9-244 (KEILRKYGVS…LDEEDPKEIE (236 aa)). Residues lysine 46, 53 to 55 (GRG), glutamate 99, cysteine 102, and glutamate 107 contribute to the ATP site. Residues asparagine 199 and aspartate 213 each coordinate Mg(2+). Substrate is bound by residues asparagine 264 and 321 to 323 (GIM).

Belongs to the succinate/malate CoA ligase beta subunit family. In terms of assembly, heterotetramer of two alpha and two beta subunits. Mg(2+) serves as cofactor.

The enzyme catalyses succinate + ATP + CoA = succinyl-CoA + ADP + phosphate. It carries out the reaction GTP + succinate + CoA = succinyl-CoA + GDP + phosphate. The protein operates within carbohydrate metabolism; tricarboxylic acid cycle; succinate from succinyl-CoA (ligase route): step 1/1. In terms of biological role, succinyl-CoA synthetase functions in the citric acid cycle (TCA), coupling the hydrolysis of succinyl-CoA to the synthesis of either ATP or GTP and thus represents the only step of substrate-level phosphorylation in the TCA. The beta subunit provides nucleotide specificity of the enzyme and binds the substrate succinate, while the binding sites for coenzyme A and phosphate are found in the alpha subunit. This is Succinate--CoA ligase [ADP-forming] subunit beta from Bacillus pumilus (strain SAFR-032).